Reading from the N-terminus, the 458-residue chain is O-acyltransferase WSD (458 aa).

The active-site Proton acceptor is the His-133.

This sequence belongs to the long-chain O-acyltransferase family.

It carries out the reaction a long chain fatty alcohol + a fatty acyl-CoA = a wax ester + CoA. The enzyme catalyses an acyl-CoA + a 1,2-diacyl-sn-glycerol = a triacyl-sn-glycerol + CoA. The protein operates within glycerolipid metabolism; triacylglycerol biosynthesis. Bifunctional wax ester synthase/diacylglycerol acyltransferase (WS and DGAT). Catalyzes the terminal and only committed step in triacylglycerol synthesis by using diacylglycerol and fatty acyl CoA as substrates. Required for storage lipid synthesis. WS uses C(12)-CoA to C(18)-CoA substrates whereas DGAT prefers C(20)-CoA. Upon expression in E.coli and Pseudomonas citronellolis (DSM 50332) both WS and DGAT activities increase. This Acinetobacter baylyi (strain ATCC 33305 / BD413 / ADP1) protein is O-acyltransferase WSD (wax-dgaT).